Consider the following 481-residue polypeptide: UDP-glucose 6-dehydrogenase 1 (481 aa).

Residues 8–13 (GAGYVG), aspartate 33, arginine 38, 86–90 (VNTPT), 127–128 (ST), and glutamate 161 each bind NAD(+). Substrate is bound by residues 157–161 (EFLAE), 216–223 (KLAANAFL), and 256–269 (RIGP…VGFG). Cysteine 272 (nucleophile) is an active-site residue. 272–275 (CFQK) contributes to the NAD(+) binding site. 334 to 335 (FK) lines the substrate pocket. Arginine 342 contacts NAD(+). Position 448 (arginine 448) interacts with substrate.

This sequence belongs to the UDP-glucose/GDP-mannose dehydrogenase family.

The enzyme catalyses UDP-alpha-D-glucose + 2 NAD(+) + H2O = UDP-alpha-D-glucuronate + 2 NADH + 3 H(+). It functions in the pathway nucleotide-sugar biosynthesis; UDP-alpha-D-glucuronate biosynthesis; UDP-alpha-D-glucuronate from UDP-alpha-D-glucose: step 1/1. Inhibited by UDP-xylose. In terms of biological role, involved in the biosynthesis of UDP-glucuronic acid (UDP-GlcA), providing nucleotide sugars for cell-wall polymers. This chain is UDP-glucose 6-dehydrogenase 1 (UGD1), found in Arabidopsis thaliana (Mouse-ear cress).